The chain runs to 494 residues: Aspartyl/glutamyl-tRNA(Asn/Gln) amidotransferase subunit B (494 aa).

The segment at 475 to 494 is disordered; sequence TSGRADPKATNQMLAKKLKG.

Belongs to the GatB/GatE family. GatB subfamily. In terms of assembly, heterotrimer of A, B and C subunits.

The enzyme catalyses L-glutamyl-tRNA(Gln) + L-glutamine + ATP + H2O = L-glutaminyl-tRNA(Gln) + L-glutamate + ADP + phosphate + H(+). It carries out the reaction L-aspartyl-tRNA(Asn) + L-glutamine + ATP + H2O = L-asparaginyl-tRNA(Asn) + L-glutamate + ADP + phosphate + 2 H(+). In terms of biological role, allows the formation of correctly charged Asn-tRNA(Asn) or Gln-tRNA(Gln) through the transamidation of misacylated Asp-tRNA(Asn) or Glu-tRNA(Gln) in organisms which lack either or both of asparaginyl-tRNA or glutaminyl-tRNA synthetases. The reaction takes place in the presence of glutamine and ATP through an activated phospho-Asp-tRNA(Asn) or phospho-Glu-tRNA(Gln). The chain is Aspartyl/glutamyl-tRNA(Asn/Gln) amidotransferase subunit B from Acaryochloris marina (strain MBIC 11017).